Reading from the N-terminus, the 513-residue chain is Meiotically up-regulated gene 133 protein (513 aa).

This sequence belongs to the UPF0300 family.

Its subcellular location is the golgi apparatus. The protein resides in the vacuole membrane. In terms of biological role, has a role in meiosis. This is Meiotically up-regulated gene 133 protein (mug133) from Schizosaccharomyces pombe (strain 972 / ATCC 24843) (Fission yeast).